The following is a 58-amino-acid chain: Large ribosomal subunit protein uL30 (58 aa).

It belongs to the universal ribosomal protein uL30 family. Part of the 50S ribosomal subunit.

This chain is Large ribosomal subunit protein uL30, found in Bacteroides fragilis (strain ATCC 25285 / DSM 2151 / CCUG 4856 / JCM 11019 / LMG 10263 / NCTC 9343 / Onslow / VPI 2553 / EN-2).